The primary structure comprises 226 residues: Triosephosphate isomerase (226 aa).

A substrate-binding site is contributed by 10–12; it reads NFK. Residue His-96 is the Electrophile of the active site. The active-site Proton acceptor is the Glu-144. Substrate is bound by residues Ile-149, Gly-184, and 205–206; that span reads AS.

It belongs to the triosephosphate isomerase family. Homotetramer; dimer of dimers.

It is found in the cytoplasm. It catalyses the reaction D-glyceraldehyde 3-phosphate = dihydroxyacetone phosphate. Its pathway is carbohydrate biosynthesis; gluconeogenesis. It participates in carbohydrate degradation; glycolysis; D-glyceraldehyde 3-phosphate from glycerone phosphate: step 1/1. Its function is as follows. Involved in the gluconeogenesis. Catalyzes stereospecifically the conversion of dihydroxyacetone phosphate (DHAP) to D-glyceraldehyde-3-phosphate (G3P). This chain is Triosephosphate isomerase, found in Methanopyrus kandleri (strain AV19 / DSM 6324 / JCM 9639 / NBRC 100938).